The primary structure comprises 129 residues: Small ribosomal subunit protein uS9 (129 aa).

This sequence belongs to the universal ribosomal protein uS9 family.

The chain is Small ribosomal subunit protein uS9 from Helicobacter pylori (strain P12).